Here is an 80-residue protein sequence, read N- to C-terminus: MKMSVTFLLILMILPLFTGEWQSGSRLSALKKRLLEKRLLQKRFCTEIGKDCGTSWECCEDCCIHGTCSHESNCANFKLR.

Residues Met-1 to Gly-19 form the signal peptide. Residues Glu-20–Gln-41 constitute a propeptide that is removed on maturation. Intrachain disulfides connect Cys-45/Cys-59, Cys-52/Cys-63, Cys-58/Cys-68, and Cys-62/Cys-74.

This sequence belongs to the conotoxin I1 superfamily. Expressed by the venom duct.

It localises to the secreted. In Californiconus californicus (California cone), this protein is Conotoxin Cl11.2.